Consider the following 82-residue polypeptide: Small ribosomal subunit protein uS17 (82 aa).

Belongs to the universal ribosomal protein uS17 family. Part of the 30S ribosomal subunit.

One of the primary rRNA binding proteins, it binds specifically to the 5'-end of 16S ribosomal RNA. This chain is Small ribosomal subunit protein uS17, found in Rhodopseudomonas palustris (strain TIE-1).